Consider the following 135-residue polypeptide: Type 3 secretion system stator protein (135 aa).

It belongs to the SctL stator family. In terms of assembly, the core secretion machinery of the T3SS is composed of approximately 20 different proteins, including cytoplasmic components, a base, an export apparatus and a needle. This subunit is part of the cytosolic complex.

Its subcellular location is the cytoplasm. In terms of biological role, component of the type III secretion system (T3SS), also called injectisome, which is used to inject bacterial effector proteins into eukaryotic host cells. Acts as a regulator of the HrcN/SctN ATPase activity. The protein is Type 3 secretion system stator protein of Rhizobium fredii (Sinorhizobium fredii).